Here is a 397-residue protein sequence, read N- to C-terminus: Elongation factor Tu (397 aa).

The tr-type G domain maps to 10–207 (KPHVNVGTIG…TLDTYIPEPE (198 aa)). The interval 19-26 (GHVDHGKT) is G1. Residue 19-26 (GHVDHGKT) participates in GTP binding. Residue Thr26 coordinates Mg(2+). The tract at residues 60–64 (GITIN) is G2. The interval 81-84 (DCPG) is G3. GTP-binding positions include 81–85 (DCPGH) and 136–139 (NKAD). The segment at 136-139 (NKAD) is G4. Residues 174 to 176 (SAL) are G5.

The protein belongs to the TRAFAC class translation factor GTPase superfamily. Classic translation factor GTPase family. EF-Tu/EF-1A subfamily. As to quaternary structure, monomer.

The protein localises to the cytoplasm. The enzyme catalyses GTP + H2O = GDP + phosphate + H(+). In terms of biological role, GTP hydrolase that promotes the GTP-dependent binding of aminoacyl-tRNA to the A-site of ribosomes during protein biosynthesis. This chain is Elongation factor Tu, found in Pseudomonas fluorescens (strain ATCC BAA-477 / NRRL B-23932 / Pf-5).